Consider the following 269-residue polypeptide: Hydroxyethylthiazole kinase (269 aa).

Substrate is bound at residue methionine 45. ATP-binding residues include arginine 121 and threonine 167. Substrate is bound at residue glycine 194.

The protein belongs to the Thz kinase family. Mg(2+) is required as a cofactor.

It catalyses the reaction 5-(2-hydroxyethyl)-4-methylthiazole + ATP = 4-methyl-5-(2-phosphooxyethyl)-thiazole + ADP + H(+). Its pathway is cofactor biosynthesis; thiamine diphosphate biosynthesis; 4-methyl-5-(2-phosphoethyl)-thiazole from 5-(2-hydroxyethyl)-4-methylthiazole: step 1/1. Functionally, catalyzes the phosphorylation of the hydroxyl group of 4-methyl-5-beta-hydroxyethylthiazole (THZ). This is Hydroxyethylthiazole kinase from Bacillus licheniformis (strain ATCC 14580 / DSM 13 / JCM 2505 / CCUG 7422 / NBRC 12200 / NCIMB 9375 / NCTC 10341 / NRRL NRS-1264 / Gibson 46).